The following is a 115-amino-acid chain: MSSPCLDRLAALSSAEEFFQVLDLPYAPEVLRVARLHILKRMGQYLATTSFAGLDDDAVRRAARDTLERAYRDFATSTPLAERVFKVLREHDPERPPARGAFVPLADILHPLTQS.

This sequence belongs to the NifW family. In terms of assembly, homotrimer; associates with NifD.

Functionally, may protect the nitrogenase Fe-Mo protein from oxidative damage. This is Nitrogenase-stabilizing/protective protein NifW from Methylobacterium sp. (strain 4-46).